Here is a 102-residue protein sequence, read N- to C-terminus: NADH-quinone oxidoreductase subunit K 1 (102 aa).

3 consecutive transmembrane segments (helical) span residues 5 to 25 (LLHVLILAGILFVLGLTCVLV), 30 to 50 (IIMMLIGIEIMLNAAMLAFVG), and 62 to 82 (VFALMIIAMTSAEVSLALALV).

It belongs to the complex I subunit 4L family. As to quaternary structure, NDH-1 is composed of 14 different subunits. Subunits NuoA, H, J, K, L, M, N constitute the membrane sector of the complex.

It is found in the cell inner membrane. It carries out the reaction a quinone + NADH + 5 H(+)(in) = a quinol + NAD(+) + 4 H(+)(out). Functionally, NDH-1 shuttles electrons from NADH, via FMN and iron-sulfur (Fe-S) centers, to quinones in the respiratory chain. The immediate electron acceptor for the enzyme in this species is believed to be ubiquinone. Couples the redox reaction to proton translocation (for every two electrons transferred, four hydrogen ions are translocated across the cytoplasmic membrane), and thus conserves the redox energy in a proton gradient. This Geotalea uraniireducens (strain Rf4) (Geobacter uraniireducens) protein is NADH-quinone oxidoreductase subunit K 1.